A 771-amino-acid polypeptide reads, in one-letter code: Glucocorticoid receptor (771 aa).

Positions 1–415 (MDLKESVTSS…STTTGPPPKL (415 aa)) are modulating. Threonine 8 carries the post-translational modification Phosphothreonine. The residue at position 22 (arginine 22) is an Omega-N-methylarginine. 5 positions are modified to phosphoserine: serine 44, serine 133, serine 199, serine 207, and serine 222. Over residues 129–172 (SRSTSVPENPKNSASAVSGTPTEEFPKTQSDLSSEQENLKSQAG) the composition is skewed to polar residues. A disordered region spans residues 129–184 (SRSTSVPENPKNSASAVSGTPTEEFPKTQSDLSSEQENLKSQAGTNGGNVKFPPDQ). A Glycyl lysine isopeptide (Lys-Gly) (interchain with G-Cter in SUMO2) cross-link involves residue lysine 254. Serine 263 bears the Phosphoserine mark. Residues lysine 273 and lysine 289 each participate in a glycyl lysine isopeptide (Lys-Gly) (interchain with G-Cter in SUMO); alternate cross-link. Residues lysine 273 and lysine 289 each participate in a glycyl lysine isopeptide (Lys-Gly) (interchain with G-Cter in SUMO2); alternate cross-link. Residues serine 303 and serine 400 each carry the phosphoserine modification. Residues 390–411 (SSPGLRPDVSSPPSSSSTTTGP) form a disordered region. Residues 400 to 409 (SPPSSSSTTT) are compositionally biased toward low complexity. Lysine 414 participates in a covalent cross-link: Glycyl lysine isopeptide (Lys-Gly) (interchain with G-Cter in ubiquitin). 2 NR C4-type zinc fingers span residues 416–436 (CLVC…CGSC) and 452–476 (CAGR…YRKC). A DNA-binding region (nuclear receptor) is located at residues 416–481 (CLVCSDELSG…RYRKCLQAGM (66 aa)). N6-acetyllysine occurs at positions 475, 487, 489, and 490. The tract at residues 480 to 771 (GMNLQARKTK…DIKKLLFHQK (292 aa)) is interaction with CLOCK. The segment at 482–517 (NLQARKTKKKIKGIQQATTGVSQNTSENPNKTIVPA) is hinge. The NR LBD domain maps to 518-752 (TLPQLTPTLV…FPEMLAEIIT (235 aa)). Residues 526 to 691 (LVSLLEVIEP…EIRMTYIKEL (166 aa)) form an interaction with CRY1 region. Lysine 697 participates in a covalent cross-link: Glycyl lysine isopeptide (Lys-Gly) (interchain with G-Cter in SUMO).

The protein belongs to the nuclear hormone receptor family. NR3 subfamily. In terms of assembly, heteromultimeric cytoplasmic complex with HSP90AA1, HSPA1A/HSPA1B, and FKBP5 or another immunophilin such as PPID, STIP1, or the immunophilin homolog PPP5C. Upon ligand binding FKBP5 dissociates from the complex and FKBP4 takes its place, thereby linking the complex to dynein and mediating transport to the nucleus, where the complex dissociates. Probably forms a complex composed of chaperones HSP90 and HSP70, co-chaperones CDC37, PPP5C, TSC1 and client protein TSC2, CDK4, AKT, RAF1 and NR3C1; this complex does not contain co-chaperones STIP1/HOP and PTGES3/p23. Directly interacts with UNC45A. Binds to DNA as a homodimer, and as heterodimer with NR3C2 or the retinoid X receptor. Binds STAT5A and STAT5B homodimers and heterodimers. Interacts with NRIP1, POU2F1, POU2F2 and TRIM28. Interacts with several coactivator complexes, including the SMARCA4 complex, CREBBP/EP300, TADA2L (Ada complex) and p160 coactivators such as NCOA2 and NCOA6. Interaction with BAG1 inhibits transactivation. Interacts with HEXIM1 and TGFB1I1. Interacts with NCOA1. Interacts with NCOA3, SMARCA4, SMARCC1, SMARCD1, and SMARCE1. Interacts with CLOCK, CRY1 and CRY2 in a ligand-dependent fashion. Interacts with CIART. Interacts with RWDD3. Interacts with UBE2I/UBC9 and this interaction is enhanced in the presence of RWDD3. Interacts with GRIP1. Interacts with NR4A3 (via nuclear receptor DNA-binding domain), represses transcription activity of NR4A3 on the POMC promoter Nur response element (NurRE). Directly interacts with PNRC2 to attract and form a complex with UPF1 and DCP1A; the interaction leads to rapid mRNA degradation. Interacts with GSK3B. Interacts with FNIP1 and FNIP2. Interacts (via C-terminus) with HNRNPU (via C-terminus). Interacts with MCM3AP. Interacts (via domain NR LBD) with HSP90AA1 and HSP90AB1. In the absence of hormonal ligand, interacts with TACC1. Interacts (via NR LBD domain) with ZNF764 (via KRAB domain); the interaction regulates transcription factor activity of NR3C1 by directing its actions toward certain biologic pathways. Post-translationally, acetylation by CLOCK reduces its binding to glucocorticoid response elements and its transcriptional activity. Increased proteasome-mediated degradation in response to glucocorticoids. In terms of processing, phosphorylated in the absence of hormone; becomes hyperphosphorylated in the presence of glucocorticoid. The Ser-199, Ser-222 and Ser-400-phosphorylated forms are mainly cytoplasmic, and the Ser-207-phosphorylated form is nuclear. Phosphorylation at Ser-207 increases transcriptional activity. Phosphorylation at Ser-199, Ser-222 and Ser-400 decreases signaling capacity. Phosphorylation at Ser-400 may protect from glucocorticoid-induced apoptosis. Phosphorylation at Ser-199 and Ser-207 is not required in regulation of chromosome segregation. May be dephosphorylated by PPP5C, attenuates NR3C1 action. Post-translationally, ubiquitinated by UBR5, leading to its degradation: UBR5 specifically recognizes and binds ligand-bound NR3C1 when it is not associated with coactivators (NCOAs). In presence of NCOAs, the UBR5-degron is not accessible, preventing its ubiquitination and degradation. Sumoylation at Lys-273 and Lys-289 negatively regulates its transcriptional activity. Sumoylation at Lys-697 positively regulates its transcriptional activity in the presence of RWDD3. Sumoylation at Lys-273 and Lys-289 is dispensable whereas sumoylation at Lys-697 is critical for the stimulatory effect of RWDD3 on its transcriptional activity. Heat shock increases sumoylation in a RWDD3-dependent manner.

It localises to the cytoplasm. The protein resides in the nucleus. It is found in the mitochondrion. Its subcellular location is the cytoskeleton. The protein localises to the spindle. It localises to the microtubule organizing center. The protein resides in the centrosome. It is found in the chromosome. Its subcellular location is the nucleoplasm. In terms of biological role, receptor for glucocorticoids (GC). Has a dual mode of action: as a transcription factor that binds to glucocorticoid response elements (GRE), both for nuclear and mitochondrial DNA, and as a modulator of other transcription factors. Affects inflammatory responses, cellular proliferation and differentiation in target tissues. Involved in chromatin remodeling. Plays a role in rapid mRNA degradation by binding to the 5' UTR of target mRNAs and interacting with PNRC2 in a ligand-dependent manner which recruits the RNA helicase UPF1 and the mRNA-decapping enzyme DCP1A, leading to RNA decay. Could act as a coactivator for STAT5-dependent transcription upon growth hormone (GH) stimulation and could reveal an essential role of hepatic GR in the control of body growth. Mediates glucocorticoid-induced apoptosis. Promotes accurate chromosome segregation during mitosis. May act as a tumor suppressor. May play a negative role in adipogenesis through the regulation of lipolytic and antilipogenic gene expression. The sequence is that of Glucocorticoid receptor (NR3C1) from Cavia porcellus (Guinea pig).